A 127-amino-acid chain; its full sequence is Riboflavin kinase (127 aa).

10-15 is a CDP binding site; it reads GLGEGR. Positions 39 and 41 each coordinate Mg(2+). The FMN site is built by T96 and E104. 109-112 contacts CDP; that stretch reads IQLR.

Belongs to the archaeal riboflavin kinase family. It depends on Mg(2+) as a cofactor.

The enzyme catalyses riboflavin + CTP = CDP + FMN + H(+). Its pathway is cofactor biosynthesis; FMN biosynthesis; FMN from riboflavin (CTP route): step 1/1. Catalyzes the CTP-dependent phosphorylation of riboflavin (vitamin B2) to form flavin mononucleotide (FMN). In Methanococcus maripaludis (strain C5 / ATCC BAA-1333), this protein is Riboflavin kinase.